A 615-amino-acid polypeptide reads, in one-letter code: UvrABC system protein C (615 aa).

The GIY-YIG domain maps to 12–91; sequence EKPGVYIMKD…IKKYKPKYNV (80 aa). A UVR domain is found at 203–238; the sequence is DWLIQKLKEDMKKAAEELRFEEAARIRDQIFAIERT.

The protein belongs to the UvrC family. In terms of assembly, interacts with UvrB in an incision complex.

It is found in the cytoplasm. Its function is as follows. The UvrABC repair system catalyzes the recognition and processing of DNA lesions. UvrC both incises the 5' and 3' sides of the lesion. The N-terminal half is responsible for the 3' incision and the C-terminal half is responsible for the 5' incision. This Thermoanaerobacter pseudethanolicus (strain ATCC 33223 / 39E) (Clostridium thermohydrosulfuricum) protein is UvrABC system protein C.